The following is a 333-amino-acid chain: Ribosomal RNA small subunit methyltransferase H (333 aa).

S-adenosyl-L-methionine is bound by residues glycine 31 to tyrosine 33, aspartate 49, phenylalanine 76, aspartate 134, and glutamine 141.

The protein belongs to the methyltransferase superfamily. RsmH family.

The protein localises to the cytoplasm. It carries out the reaction cytidine(1402) in 16S rRNA + S-adenosyl-L-methionine = N(4)-methylcytidine(1402) in 16S rRNA + S-adenosyl-L-homocysteine + H(+). In terms of biological role, specifically methylates the N4 position of cytidine in position 1402 (C1402) of 16S rRNA. The chain is Ribosomal RNA small subunit methyltransferase H from Wolbachia sp. subsp. Brugia malayi (strain TRS).